A 517-amino-acid chain; its full sequence is Facilitated trehalose transporter Tret1 (517 aa).

Residues methionine 1–glutamine 56 are Cytoplasmic-facing. A helical membrane pass occupies residues valine 57–threonine 77. The Extracellular segment spans residues serine 78 to serine 100. N-linked (GlcNAc...) asparagine glycosylation is present at asparagine 88. Residues tryptophan 101 to isoleucine 121 form a helical membrane-spanning segment. Over glutamate 122–threonine 135 the chain is Cytoplasmic. Residues proline 136 to glycine 156 traverse the membrane as a helical segment. Residues arginine 157–alanine 158 lie on the Extracellular side of the membrane. The chain crosses the membrane as a helical span at residues leucine 159–valine 179. Over glutamine 180–arginine 184 the chain is Cytoplasmic. The helical transmembrane segment at glycine 185 to alanine 205 threads the bilayer. At glycine 206–serine 212 the chain is on the extracellular side. Residues glutamate 213–proline 233 form a helical membrane-spanning segment. Residues glutamate 234 to proline 296 are Cytoplasmic-facing. The chain crosses the membrane as a helical span at residues leucine 297–phenylalanine 317. Residues tyrosine 318 to asparagine 333 are Extracellular-facing. Residues leucine 334–isoleucine 354 traverse the membrane as a helical segment. The Cytoplasmic portion of the chain corresponds to aspartate 355 to lysine 360. The helical transmembrane segment at methionine 361 to phenylalanine 381 threads the bilayer. The Extracellular segment spans residues tyrosine 382–histidine 392. Residues isoleucine 393–glycine 413 traverse the membrane as a helical segment. Over proline 414–threonine 437 the chain is Cytoplasmic. The helical transmembrane segment at alanine 438–isoleucine 458 threads the bilayer. Residues glycine 459–histidine 461 are Extracellular-facing. The helical transmembrane segment at glycine 462–valine 482 threads the bilayer. Residues proline 483 to methionine 517 are Cytoplasmic-facing.

It belongs to the major facilitator superfamily. Sugar transporter (TC 2.A.1.1) family. Trehalose transporter subfamily.

It localises to the cell membrane. Functionally, high-capacity facilitative transporter for trehalose. Does not transport maltose, sucrose or lactose. Mediates the bidirectional transfer of trehalose. Responsible for the transport of trehalose synthesized in the fat body and the incorporation of trehalose into other tissues that require a carbon source, thereby regulating trehalose levels in the hemolymph. In Culex quinquefasciatus (Southern house mosquito), this protein is Facilitated trehalose transporter Tret1.